Reading from the N-terminus, the 473-residue chain is Glutamyl-tRNA reductase (473 aa).

Substrate-binding positions include 49–52, S109, 114–116, and Q120; these read TCNR and EHQ. The Nucleophile role is filled by C50. 189 to 194 serves as a coordination point for NADP(+); sequence GAGAMA. The segment at 422–473 is disordered; the sequence is VAISAPQPSTDSPARAAYQPTDEAATDAEPRRDDAEPPSAAAAQDAGRESRP.

It belongs to the glutamyl-tRNA reductase family. In terms of assembly, homodimer.

It catalyses the reaction (S)-4-amino-5-oxopentanoate + tRNA(Glu) + NADP(+) = L-glutamyl-tRNA(Glu) + NADPH + H(+). Its pathway is porphyrin-containing compound metabolism; protoporphyrin-IX biosynthesis; 5-aminolevulinate from L-glutamyl-tRNA(Glu): step 1/2. Catalyzes the NADPH-dependent reduction of glutamyl-tRNA(Glu) to glutamate 1-semialdehyde (GSA). The protein is Glutamyl-tRNA reductase of Acidothermus cellulolyticus (strain ATCC 43068 / DSM 8971 / 11B).